Here is a 972-residue protein sequence, read N- to C-terminus: MGPGVLLLLLVATAWHGQGIPVIEPSVPELVVKPGATVTLRCVGNGSVEWDGPPSPHWTLYSDGSSSILSTNNATFQNTGTYRCTEPGDPLGGSAAIHLYVKDPARPWNVLAQEVVVFEDQDALLPCLLTDPVLEAGVSLVRVRGRPLMRHTNYSFSPWHGFTIHRAKFIQSQDYQCSALMGGRKVMSISIRLKVQKVIPGPPALTLVPAELVRIRGEAAQIVCSASSVDVNFDVFLQHNNTKLAIPQQSDFHNNRYQKVLTLNLDQVDFQHAGNYSCVASNVQGKHSTSMFFRVVESAYLNLSSEQNLIQEVTVGEGLNLKVMVEAYPGLQGFNWTYLGPFSDHQPEPKLANATTKDTYRHTFTLSLPRLKPSEAGRYSFLARNPGGWRALTFELTLRYPPEVSVIWTFINGSGTLLCAASGYPQPNVTWLQCSGHTDRCDEAQVLQVWDDPYPEVLSQEPFHKVTVQSLLTVETLEHNQTYECRAHNSVGSGSWAFIPISAGAHTHPPDEFLFTPVVVACMSIMALLLLLLLLLLYKYKQKPKYQVRWKIIESYEGNSYTFIDPTQLPYNEKWEFPRNNLQFGKTLGAGAFGKVVEATAFGLGKEDAVLKVAVKMLKSTAHADEKEALMSELKIMSHLGQHENIVNLLGACTHGGPVLVITEYCCYGDLLNFLRRKAEAMLGPSLSPGQDPEGGVDYKNIHLEKKYVRRDSGFSSQGVDTYVEMRPVSTSSNDSFSEQDLDKEDGRPLELRDLLHFSSQVAQGMAFLASKNCIHRDVAARNVLLTNGHVAKIGDFGLARDIMNDSNYIVKGNARLPVKWMAPESIFDCVYTVQSDVWSYGILLWEIFSLGLNPYPGILVNSKFYKLVKDGYQMAQPAFAPKNIYSIMQACWALEPTHRPTFQQICSFLQEQAQEDRRERDYTNLPSSSRSGGSGSSSSELEEESSSEHLTCCEQGDIAQPLLQPNNYQFC.

The N-terminal stretch at 1-19 (MGPGVLLLLLVATAWHGQG) is a signal peptide. At 20 to 517 (IPVIEPSVPE…HPPDEFLFTP (498 aa)) the chain is on the extracellular side. 5 Ig-like C2-type domains span residues 21–104 (PVIE…VKDP), 107–197 (PWNV…KVQK), 203–290 (PALT…HSTS), 299–399 (AYLN…LTLR), and 402–502 (PEVS…IPIS). Cystine bridges form between Cys42/Cys84, Cys127/Cys177, and Cys224/Cys278. N-linked (GlcNAc...) asparagine glycans are attached at residues Asn45, Asn73, Asn153, Asn240, Asn275, Asn302, Asn335, Asn353, Asn412, Asn428, and Asn480. Cys419 and Cys485 form a disulfide bridge. Residues 518–538 (VVVACMSIMALLLLLLLLLLY) form a helical membrane-spanning segment. Residues 539–972 (KYKQKPKYQV…LLQPNNYQFC (434 aa)) are Cytoplasmic-facing. The regulatory juxtamembrane domain stretch occupies residues 542 to 574 (QKPKYQVRWKIIESYEGNSYTFIDPTQLPYNEK). 2 positions are modified to phosphotyrosine; by autocatalysis: Tyr546 and Tyr561. Residues 582–910 (LQFGKTLGAG…PTFQQICSFL (329 aa)) form the Protein kinase domain. ATP is bound by residues 588–596 (LGAGAFGKV) and Lys616. Residues Tyr699 and Tyr708 each carry the phosphotyrosine; by autocatalysis modification. Position 713 is a phosphoserine (Ser713). Tyr723 carries the post-translational modification Phosphotyrosine; by autocatalysis. The Proton acceptor role is filled by Asp778. Residues 796 to 818 (DFGLARDIMNDSNYIVKGNARLP) form an activation loop region. Phosphotyrosine; by autocatalysis occurs at positions 809 and 923. The tract at residues 918–950 (RRERDYTNLPSSSRSGGSGSSSSELEEESSSEH) is disordered. Over residues 928–940 (SSSRSGGSGSSSS) the composition is skewed to low complexity. Position 969 is a phosphotyrosine; by autocatalysis (Tyr969).

The protein belongs to the protein kinase superfamily. Tyr protein kinase family. CSF-1/PDGF receptor subfamily. In terms of assembly, interacts with INPPL1/SHIP2 and THOC5. Monomer. Homodimer. Interacts with CSF1 and IL34. Interaction with dimeric CSF1 or IL34 leads to receptor homodimerization. Interacts (tyrosine phosphorylated) with PLCG2 (via SH2 domain). Interacts (tyrosine phosphorylated) with PIK3R1 (via SH2 domain). Interacts (tyrosine phosphorylated) with FYN, YES1 and SRC (via SH2 domain). Interacts (tyrosine phosphorylated) with CBL, GRB2 and SLA2. In terms of processing, autophosphorylated in response to CSF1 or IL34 binding. Phosphorylation at Tyr-561 is important for normal down-regulation of signaling by ubiquitination, internalization and degradation. Phosphorylation at Tyr-561 and Tyr-809 is important for interaction with SRC family members, including FYN, YES1 and SRC, and for subsequent activation of these protein kinases. Phosphorylation at Tyr-699 and Tyr-923 is important for interaction with GRB2. Phosphorylation at Tyr-723 is important for interaction with PIK3R1. Phosphorylation at Tyr-708 is important for normal receptor degradation. Phosphorylation at Tyr-723 and Tyr-809 is important for interaction with PLCG2. Phosphorylation at Tyr-969 is important for interaction with CBL. Dephosphorylation by PTPN2 negatively regulates downstream signaling and macrophage differentiation. Ubiquitinated. Becomes rapidly polyubiquitinated after autophosphorylation, leading to its degradation. In terms of tissue distribution, expressed in bone marrow and in differentiated blood mononuclear cells.

The protein resides in the cell membrane. It carries out the reaction L-tyrosyl-[protein] + ATP = O-phospho-L-tyrosyl-[protein] + ADP + H(+). Its activity is regulated as follows. Present in an inactive conformation in the absence of bound ligand. CSF1 or IL34 binding leads to dimerization and activation by autophosphorylation on tyrosine residues. Inhibited by imatinib/STI-571 (Gleevec), dasatinib, sunitinib/SU11248, lestaurtinib/CEP-701, midostaurin/PKC-412, Ki20227, linifanib/ABT-869, Axitinib/AG013736, sorafenib/BAY 43-9006 and GW2580. In terms of biological role, tyrosine-protein kinase that acts as a cell-surface receptor for CSF1 and IL34 and plays an essential role in the regulation of survival, proliferation and differentiation of hematopoietic precursor cells, especially mononuclear phagocytes, such as macrophages and monocytes. Promotes the release of pro-inflammatory chemokines in response to IL34 and CSF1, and thereby plays an important role in innate immunity and in inflammatory processes. Plays an important role in the regulation of osteoclast proliferation and differentiation, the regulation of bone resorption, and is required for normal bone and tooth development. Required for normal male and female fertility, and for normal development of milk ducts and acinar structures in the mammary gland during pregnancy. Promotes reorganization of the actin cytoskeleton, regulates formation of membrane ruffles, cell adhesion and cell migration, and promotes cancer cell invasion. Activates several signaling pathways in response to ligand binding, including the ERK1/2 and the JNK pathway. Phosphorylates PIK3R1, PLCG2, GRB2, SLA2 and CBL. Activation of PLCG2 leads to the production of the cellular signaling molecules diacylglycerol and inositol 1,4,5-trisphosphate, that then lead to the activation of protein kinase C family members, especially PRKCD. Phosphorylation of PIK3R1, the regulatory subunit of phosphatidylinositol 3-kinase, leads to activation of the AKT1 signaling pathway. Activated CSF1R also mediates activation of the MAP kinases MAPK1/ERK2 and/or MAPK3/ERK1, and of the SRC family kinases SRC, FYN and YES1. Activated CSF1R transmits signals both via proteins that directly interact with phosphorylated tyrosine residues in its intracellular domain, or via adapter proteins, such as GRB2. Promotes activation of STAT family members STAT3, STAT5A and/or STAT5B. Promotes tyrosine phosphorylation of SHC1 and INPP5D/SHIP-1. Receptor signaling is down-regulated by protein phosphatases, such as INPP5D/SHIP-1, that dephosphorylate the receptor and its downstream effectors, and by rapid internalization of the activated receptor. In the central nervous system, may play a role in the development of microglia macrophages. In Homo sapiens (Human), this protein is Macrophage colony-stimulating factor 1 receptor (CSF1R).